We begin with the raw amino-acid sequence, 2194 residues long: Glutamate synthase [NADH], amyloplastic (2194 aa).

An amyloplast-targeting transit peptide spans 1–101; sequence MSNSLSLTFT…LYDPAFDKDS (101 aa). The Nucleophile role is filled by Cys-102. The 402-residue stretch at 102–503 folds into the Glutamine amidotransferase type-2 domain; the sequence is CGVGFVAELN…PGMMLLVDFE (402 aa). The segment at 1021-1045 is disordered; the sequence is GGKSNTGEGGEQPSRMEPLADGSRN. 1193 to 1250 contributes to the FMN binding site; sequence LAETHQTLVANDLRGRTTLQTDGQLKTGRDVAIAALLGAEEYGFSTAPLITLGCIMMR. Residues Cys-1246, Cys-1252, and Cys-1257 each contribute to the [3Fe-4S] cluster site. 1974-1988 lines the NAD(+) pocket; the sequence is GGGDTGTDCIGTSIR.

Belongs to the glutamate synthase family. In terms of assembly, monomer. Requires [3Fe-4S] cluster as cofactor. FAD is required as a cofactor. FMN serves as cofactor. Expressed in infected cells in root nodules. Barely detected in roots and stems.

Its subcellular location is the plastid. The protein localises to the amyloplast. The catalysed reaction is 2 L-glutamate + NAD(+) = L-glutamine + 2-oxoglutarate + NADH + H(+). It participates in amino-acid biosynthesis; L-glutamate biosynthesis via GLT pathway; L-glutamate from 2-oxoglutarate and L-glutamine (NAD(+) route): step 1/1. It functions in the pathway energy metabolism; nitrogen metabolism. Inhibited by malate, citrate, glutamate, NAD(+) and azaserine, but not by 2-2' dipyridil and N-ethylmaleimide. Required for the assimilation of symbiotically fixed nitrogen into amino acids in root nodules. This is Glutamate synthase [NADH], amyloplastic from Medicago sativa (Alfalfa).